The following is a 342-amino-acid chain: Fatty acid desaturase 6 (342 aa).

Helical transmembrane passes span 39 to 59 and 63 to 83; these read GVDCAILALSLLALPPGFLCL and SPLVFALGITILGVCHYTLTV. Positions 87 to 91 match the Histidine box-1 motif; that stretch reads HLATH. A Histidine box-2 motif is present at residues 124–128; the sequence is HVKMH. A run of 2 helical transmembrane segments spans residues 151-171 and 185-205; these read YVYMFLAPLLIPIITPLVAVE and LGLISLGLYSQYWLLLNVSGF. A Histidine box-3 motif is present at residues 277–281; it reads HVEHH.

This sequence belongs to the fatty acid desaturase type 1 family.

It localises to the membrane. It participates in lipid metabolism; fatty acid metabolism. The sequence is that of Fatty acid desaturase 6 (FADS6) from Bos taurus (Bovine).